The chain runs to 279 residues: Prepilin leader peptidase/N-methyltransferase (279 aa).

At 1-16 (MDDLREFAQLFPAWWF) the chain is on the periplasmic side. A helical membrane pass occupies residues 17–35 (GALGVLGLIVGSFLNVVIY). Residues 36–104 (RLPIMLERRW…RSRCCHQSVS (69 aa)) lie on the Cytoplasmic side of the membrane. The chain crosses the membrane as a helical span at residues 105-123 (VQYPLVEVITMLAFLAAGL). Residues 124-130 (LWLPGMA) lie on the Periplasmic side of the membrane. A helical membrane pass occupies residues 131–149 (LWGALILLSFLLVLTVIDI). Residues 150–163 (KTLLLPDELTLSLL) lie on the Cytoplasmic side of the membrane. The helical transmembrane segment at 164–182 (WMGLLFNLSGTFVSLNDAV) threads the bilayer. Over 183-185 (VGA) the chain is Periplasmic. A helical membrane pass occupies residues 186 to 204 (MAGYLSLWLLYWAFKYATG). Over 205-214 (KEALGYGDFK) the chain is Cytoplasmic. A helical transmembrane segment spans residues 215–233 (LLAALGAWLGWQALPNLVL). The Periplasmic portion of the chain corresponds to 234–236 (VAA). Residues 237–254 (LSGLVVTLIWRGLRKEDT) traverse the membrane as a helical segment. Over 255-257 (AKP) the chain is Cytoplasmic. A helical membrane pass occupies residues 258-276 (LAFGPWLAIGGVFGMIMNG). At 277-279 (FNL) the chain is on the periplasmic side.

Belongs to the peptidase A24 family.

The protein resides in the cell inner membrane. It carries out the reaction Typically cleaves a -Gly-|-Phe- bond to release an N-terminal, basic peptide of 5-8 residues from type IV prepilin, and then N-methylates the new N-terminal amino group, the methyl donor being S-adenosyl-L-methionine.. Its function is as follows. Plays a role in type II pseudopili formation by proteolytically removing the leader sequence from substrate proteins and subsequently monomethylating the alpha-amino group of the newly exposed N-terminal phenylalanine. Substrates include proteins required for biogenesis of the type II general secretory apparatus. This chain is Prepilin leader peptidase/N-methyltransferase (outO), found in Pectobacterium carotovorum subsp. carotovorum (Erwinia carotovora subsp. carotovora).